Consider the following 877-residue polypeptide: Alanine--tRNA ligase (877 aa).

Residues His-567, His-571, Cys-669, and His-673 each coordinate Zn(2+).

This sequence belongs to the class-II aminoacyl-tRNA synthetase family. Requires Zn(2+) as cofactor.

The protein localises to the cytoplasm. The enzyme catalyses tRNA(Ala) + L-alanine + ATP = L-alanyl-tRNA(Ala) + AMP + diphosphate. In terms of biological role, catalyzes the attachment of alanine to tRNA(Ala) in a two-step reaction: alanine is first activated by ATP to form Ala-AMP and then transferred to the acceptor end of tRNA(Ala). Also edits incorrectly charged Ser-tRNA(Ala) and Gly-tRNA(Ala) via its editing domain. This Rickettsia prowazekii (strain Madrid E) protein is Alanine--tRNA ligase.